We begin with the raw amino-acid sequence, 969 residues long: Protein translocase subunit SecA (969 aa).

ATP-binding positions include Gln99, 117–121 (GEGKT), and Asp631.

This sequence belongs to the SecA family. As to quaternary structure, monomer and homodimer. Part of the essential Sec protein translocation apparatus which comprises SecA, SecYEG and auxiliary proteins SecDF. Other proteins may also be involved.

Its subcellular location is the cell inner membrane. The protein resides in the cytoplasm. The enzyme catalyses ATP + H2O + cellular proteinSide 1 = ADP + phosphate + cellular proteinSide 2.. Functionally, part of the Sec protein translocase complex. Interacts with the SecYEG preprotein conducting channel. Has a central role in coupling the hydrolysis of ATP to the transfer of proteins into and across the cell membrane, serving as an ATP-driven molecular motor driving the stepwise translocation of polypeptide chains across the membrane. In Chlamydia trachomatis serovar D (strain ATCC VR-885 / DSM 19411 / UW-3/Cx), this protein is Protein translocase subunit SecA.